The primary structure comprises 355 residues: Dual-specificity RNA methyltransferase RlmN (355 aa).

Catalysis depends on Glu-86, which acts as the Proton acceptor. The region spanning 105–338 (KEARYTVCVS…CTIRESKGLD (234 aa)) is the Radical SAM core domain. Cysteines 112 and 343 form a disulfide. Residues Cys-119, Cys-123, and Cys-126 each contribute to the [4Fe-4S] cluster site. Residues 169-170 (GE), Ser-201, 224-226 (SLH), and Asn-300 contribute to the S-adenosyl-L-methionine site. The S-methylcysteine intermediate role is filled by Cys-343.

Belongs to the radical SAM superfamily. RlmN family. It depends on [4Fe-4S] cluster as a cofactor.

The protein localises to the cytoplasm. The enzyme catalyses adenosine(2503) in 23S rRNA + 2 reduced [2Fe-2S]-[ferredoxin] + 2 S-adenosyl-L-methionine = 2-methyladenosine(2503) in 23S rRNA + 5'-deoxyadenosine + L-methionine + 2 oxidized [2Fe-2S]-[ferredoxin] + S-adenosyl-L-homocysteine. It catalyses the reaction adenosine(37) in tRNA + 2 reduced [2Fe-2S]-[ferredoxin] + 2 S-adenosyl-L-methionine = 2-methyladenosine(37) in tRNA + 5'-deoxyadenosine + L-methionine + 2 oxidized [2Fe-2S]-[ferredoxin] + S-adenosyl-L-homocysteine. Specifically methylates position 2 of adenine 2503 in 23S rRNA and position 2 of adenine 37 in tRNAs. m2A2503 modification seems to play a crucial role in the proofreading step occurring at the peptidyl transferase center and thus would serve to optimize ribosomal fidelity. This chain is Dual-specificity RNA methyltransferase RlmN, found in Nitratiruptor sp. (strain SB155-2).